The chain runs to 492 residues: Argininosuccinate lyase (492 aa).

Belongs to the lyase 1 family. Argininosuccinate lyase subfamily.

It is found in the cytoplasm. It catalyses the reaction 2-(N(omega)-L-arginino)succinate = fumarate + L-arginine. It functions in the pathway amino-acid biosynthesis; L-arginine biosynthesis; L-arginine from L-ornithine and carbamoyl phosphate: step 3/3. In Methanoculleus marisnigri (strain ATCC 35101 / DSM 1498 / JR1), this protein is Argininosuccinate lyase.